A 328-amino-acid chain; its full sequence is Bidirectional sugar transporter SWEET16 (328 aa).

The Extracellular segment spans residues 1-5 (MADPS). The helical transmembrane segment at 6–26 (FFVGIVGNVISILVFASPIAT) threads the bilayer. Residues 6–92 (FFVGIVGNVI…TLYLAYAPRE (87 aa)) form the MtN3/slv 1 domain. Residues 27–38 (FRRIVRSKSTEE) lie on the Cytoplasmic side of the membrane. The helical transmembrane segment at 39–56 (FRWLPYVTTLLSTSLWTF) threads the bilayer. The Extracellular portion of the chain corresponds to 57 to 63 (YGLHKPG). A helical transmembrane segment spans residues 64 to 84 (GLLIVTVNGSGAALEAIYVTL). Residues 85-99 (YLAYAPRETKAKMVK) lie on the Cytoplasmic side of the membrane. A helical membrane pass occupies residues 100–120 (VVLAVNVGALAAVVAVALVAL). The Extracellular segment spans residues 121 to 125 (HGGVR). Residues 126–146 (LFVVGVLCAALTIGMYAAPMA) traverse the membrane as a helical segment. Positions 127–213 (FVVGVLCAAL…LYMAYRRTKK (87 aa)) constitute a MtN3/slv 2 domain. At 147-161 (AMRTVVKTRSVEYMP) the chain is on the cytoplasmic side. The helical transmembrane segment at 162 to 182 (FSLSFFLFLNGGVWSVYSLLV) threads the bilayer. Over 183 to 185 (KDY) the chain is Extracellular. The chain crosses the membrane as a helical span at residues 186–206 (FIGIPNAIGFALGTAQLALYM). Residues 207 to 328 (AYRRTKKPAG…ATTAGPGDRH (122 aa)) lie on the Cytoplasmic side of the membrane. Positions 288 to 299 (HQHHGGHHHHHR) are enriched in basic residues. Residues 288–328 (HQHHGGHHHHHRFDTVPDDDDEAVAAGGTTPATTAGPGDRH) form a disordered region. The span at 312-328 (AAGGTTPATTAGPGDRH) shows a compositional bias: low complexity.

The protein belongs to the SWEET sugar transporter family. Forms homooligomers and/or heterooligomers.

It is found in the cell membrane. In terms of biological role, mediates both low-affinity uptake and efflux of sugar across the plasma membrane. In Oryza sativa subsp. japonica (Rice), this protein is Bidirectional sugar transporter SWEET16 (SWEET16).